The primary structure comprises 586 residues: Merlin (586 aa).

Ser-9 carries the phosphoserine modification. The FERM domain maps to 18 to 307; that stretch reads FTVRIVTMDA…GNHDLFMRRR (290 aa). The disordered stretch occupies residues 325–354; it reads KARKQMERQRLAREKQMREEAERSRDEPER. Ser-514 is modified (phosphoserine; by PAK). The interval 557–586 is disordered; the sequence is LHSEHSDSGTSSKHNTIKKPQAQGRRPICI.

Interacts with NHERF1, HGS and AGAP2. Interacts with SGSM3. Interacts (via FERM domain) with MPP1. Interacts with LAYN and WWC1. Interacts with the CUL4A-RBX1-DDB1-VprBP/DCAF1 E3 ubiquitin-protein ligase complex. The unphosphorylated form interacts (via FERM domain) with VPRBP/DCAF1. Interacts (via FERM domain) with NOP53; the interaction is direct. Interacts with SCHIP1; the interaction is direct. In terms of processing, ubiquitinated by the CUL4A-RBX1-DDB1-DCAF1/VprBP E3 ubiquitin-protein ligase complex for ubiquitination and subsequent proteasome-dependent degradation. Post-translationally, phosphorylation of Ser-514 inhibits nuclear localization by disrupting the intramolecular association of the FERM domain with the C-terminal tail. The dephosphorylation of Ser-514 favors the interaction with NOP53.

The protein localises to the cell membrane. It localises to the cell projection. Its subcellular location is the cytoplasm. It is found in the cytoskeleton. The protein resides in the nucleus. In terms of biological role, probable regulator of the Hippo/SWH (Sav/Wts/Hpo) signaling pathway, a signaling pathway that plays a pivotal role in tumor suppression by restricting proliferation and promoting apoptosis. Along with WWC1 can synergistically induce the phosphorylation of LATS1 and LATS2 and can probably function in the regulation of the Hippo/SWH (Sav/Wts/Hpo) signaling pathway. May act as a membrane stabilizing protein. May inhibit PI3 kinase by binding to AGAP2 and impairing its stimulating activity. Suppresses cell proliferation and tumorigenesis by inhibiting the CUL4A-RBX1-DDB1-VprBP/DCAF1 E3 ubiquitin-protein ligase complex Plays a role in lens development and is required for complete fiber cell terminal differentiation, maintenance of cell polarity and separation of the lens vesicle from the corneal epithelium. This chain is Merlin (Nf2), found in Rattus norvegicus (Rat).